Reading from the N-terminus, the 252-residue chain is Ubiquinone/menaquinone biosynthesis C-methyltransferase UbiE (252 aa).

Residues T75, D96, and 123 to 124 (NA) each bind S-adenosyl-L-methionine.

The protein belongs to the class I-like SAM-binding methyltransferase superfamily. MenG/UbiE family.

It carries out the reaction a 2-demethylmenaquinol + S-adenosyl-L-methionine = a menaquinol + S-adenosyl-L-homocysteine + H(+). The enzyme catalyses a 2-methoxy-6-(all-trans-polyprenyl)benzene-1,4-diol + S-adenosyl-L-methionine = a 5-methoxy-2-methyl-3-(all-trans-polyprenyl)benzene-1,4-diol + S-adenosyl-L-homocysteine + H(+). It functions in the pathway quinol/quinone metabolism; menaquinone biosynthesis; menaquinol from 1,4-dihydroxy-2-naphthoate: step 2/2. Its pathway is cofactor biosynthesis; ubiquinone biosynthesis. In terms of biological role, methyltransferase required for the conversion of demethylmenaquinol (DMKH2) to menaquinol (MKH2) and the conversion of 2-polyprenyl-6-methoxy-1,4-benzoquinol (DDMQH2) to 2-polyprenyl-3-methyl-6-methoxy-1,4-benzoquinol (DMQH2). This is Ubiquinone/menaquinone biosynthesis C-methyltransferase UbiE from Methylobacterium nodulans (strain LMG 21967 / CNCM I-2342 / ORS 2060).